The primary structure comprises 185 residues: Lactoylglutathione lyase (185 aa).

The tract at residues 1 to 21 (MASEAKESPANNPGLSTVRDE) is disordered. The VOC domain occupies 27 to 174 (IMQQTMFRVK…DGYWIEIFDL (148 aa)). 2 residues coordinate substrate: Gln-30 and Arg-34. Residue Gln-30 participates in Zn(2+) binding. Glu-96 lines the Zn(2+) pocket. Substrate contacts are provided by residues Asn-100, Arg-120, His-124, and 154 to 155 (KM). His-124 is a Zn(2+) binding site. Glu-170 contacts Zn(2+). Glu-170 acts as the Proton donor/acceptor in catalysis.

Belongs to the glyoxalase I family. It depends on Zn(2+) as a cofactor.

It catalyses the reaction (R)-S-lactoylglutathione = methylglyoxal + glutathione. It participates in secondary metabolite metabolism; methylglyoxal degradation; (R)-lactate from methylglyoxal: step 1/2. Functionally, catalyzes the conversion of hemimercaptal, formed from methylglyoxal and glutathione, to S-lactoylglutathione. The chain is Lactoylglutathione lyase (GLY I) from Brassica juncea (Indian mustard).